The sequence spans 846 residues: Sucrose synthase 6 (846 aa).

Residues 276-755 (CVFTVVIFSI…GLQRIYECYT (480 aa)) form a GT-B glycosyltransferase region.

It belongs to the glycosyltransferase 1 family. Plant sucrose synthase subfamily.

The enzyme catalyses an NDP-alpha-D-glucose + D-fructose = a ribonucleoside 5'-diphosphate + sucrose + H(+). Sucrose-cleaving enzyme that provides UDP-glucose and fructose for various metabolic pathways. The chain is Sucrose synthase 6 (SUS6) from Oryza sativa subsp. japonica (Rice).